Consider the following 315-residue polypeptide: Acetyl-coenzyme A carboxylase carboxyl transferase subunit alpha (315 aa).

The 254-residue stretch at 40-293 folds into the CoA carboxyltransferase C-terminal domain; sequence LEDKKIALTK…KKNVLAALDR (254 aa).

Belongs to the AccA family. As to quaternary structure, acetyl-CoA carboxylase is a heterohexamer composed of biotin carboxyl carrier protein (AccB), biotin carboxylase (AccC) and two subunits each of ACCase subunit alpha (AccA) and ACCase subunit beta (AccD).

Its subcellular location is the cytoplasm. The catalysed reaction is N(6)-carboxybiotinyl-L-lysyl-[protein] + acetyl-CoA = N(6)-biotinyl-L-lysyl-[protein] + malonyl-CoA. The protein operates within lipid metabolism; malonyl-CoA biosynthesis; malonyl-CoA from acetyl-CoA: step 1/1. Functionally, component of the acetyl coenzyme A carboxylase (ACC) complex. First, biotin carboxylase catalyzes the carboxylation of biotin on its carrier protein (BCCP) and then the CO(2) group is transferred by the carboxyltransferase to acetyl-CoA to form malonyl-CoA. The polypeptide is Acetyl-coenzyme A carboxylase carboxyl transferase subunit alpha (Marinomonas sp. (strain MWYL1)).